The chain runs to 363 residues: SWIRM domain-containing protein YOR338W (363 aa).

Disordered regions lie at residues 1–22 and 186–208; these read MLDN…GGIN and LYED…VPVR. Positions 186–196 are enriched in basic and acidic residues; the sequence is LYEDDGNRSEN. In terms of domain architecture, SWIRM spans 266-363; that stretch reads LKVEWKGSPM…LQDKHFEKYL (98 aa).

In Saccharomyces cerevisiae (strain ATCC 204508 / S288c) (Baker's yeast), this protein is SWIRM domain-containing protein YOR338W.